The primary structure comprises 84 residues: Putative membrane protein insertion efficiency factor (84 aa).

This sequence belongs to the UPF0161 family.

The protein resides in the cell inner membrane. Its function is as follows. Could be involved in insertion of integral membrane proteins into the membrane. The protein is Putative membrane protein insertion efficiency factor of Shewanella pealeana (strain ATCC 700345 / ANG-SQ1).